The following is a 306-amino-acid chain: Nod factor export ATP-binding protein I (306 aa).

Residues 8-238 (IDLVGVRKSF…HIGCNVIEIY (231 aa)) form the ABC transporter domain. Residue 40–47 (GPNGAGKS) participates in ATP binding.

Belongs to the ABC transporter superfamily. Lipooligosaccharide exporter (TC 3.A.1.102) family. In terms of assembly, the complex is composed of two ATP-binding proteins (NodI) and two transmembrane proteins (NodJ).

Its subcellular location is the cell inner membrane. Part of the ABC transporter complex NodIJ involved in the export of the nodulation factors (Nod factors), the bacterial signal molecules that induce symbiosis and subsequent nodulation induction. Nod factors are LCO (lipo-chitin oligosaccharide), a modified beta-1,4-linked N-acetylglucosamine oligosaccharide. This subunit is responsible for energy coupling to the transport system. The sequence is that of Nod factor export ATP-binding protein I from Bradyrhizobium diazoefficiens (strain JCM 10833 / BCRC 13528 / IAM 13628 / NBRC 14792 / USDA 110).